Reading from the N-terminus, the 202-residue chain is Large ribosomal subunit protein bL25 (202 aa).

It belongs to the bacterial ribosomal protein bL25 family. CTC subfamily. As to quaternary structure, part of the 50S ribosomal subunit; part of the 5S rRNA/L5/L18/L25 subcomplex. Contacts the 5S rRNA. Binds to the 5S rRNA independently of L5 and L18.

Functionally, this is one of the proteins that binds to the 5S RNA in the ribosome where it forms part of the central protuberance. The protein is Large ribosomal subunit protein bL25 of Nitrosomonas eutropha (strain DSM 101675 / C91 / Nm57).